The chain runs to 85 residues: Delta/kappa-theraphotoxin-Pm1a (85 aa).

The first 19 residues, 1–19 (MKTFVFIVLVALAFVLTAA), serve as a signal peptide directing secretion. Positions 20-43 (KEERANPSELVSALAELVMLDAER) are excised as a propeptide. 3 disulfides stabilise this stretch: C50-C64, C57-C69, and C63-C77.

The protein belongs to the neurotoxin 10 (Hwtx-1) family. Expressed by the venom gland.

It is found in the secreted. Functionally, multimodal toxin that enhances nociceptor excitability mainly by the simultaneous stimulation of repetitive firing (through Nav1.8/SCN10A channel current enhancement) and impairment of repolarization (by inhibiting delayed rectifier current of Kv2.1/KCNB1), with a potential contribution from tetrodotoxin-sensitive voltage-gated sodium channels (Nav) modified excitability. Enhances Nav1.8/SCN10A currents (EC(50)=1.1 uM), modifies the channel gating by a right-shift in steady-state inactivation and delays open-state inactivation. Also decreases Kv2.1/KCNB1 currents (IC(50)=0.43 uM) and causes a depolarizing shift in the voltage dependence of activation without change in steady-state inactivation. In addition, inhibits peak currents of human sodium channels (Nav1.1 to Nav1.7, IC(50)=0.38-2.3 uM) and delays fast inactivation of Nav1.1/SCN1A, Nav1.3/SCN3A, Nav1.6/SCN8A, and Nav1.7/SCN9A. In small dorsal root ganglion neurons, induces hyperexcitability by enhancing tetrodotoxin-resistant sodium currents, impairing repolarization and lowering the threshold of action potential firing, consistent with the severe pain associated with envenomation. In vivo, elicits nocifensive behavior in mice after intraplantar injection. The chain is Delta/kappa-theraphotoxin-Pm1a from Pelinobius muticus (King baboon spider).